The primary structure comprises 98 residues: NADH-ubiquinone oxidoreductase chain 4L (98 aa).

The next 3 helical transmembrane spans lie at 1–21 (MIPT…GMLT), 27–47 (VASL…TTLI), and 61–81 (IILL…LISI).

It belongs to the complex I subunit 4L family. As to quaternary structure, core subunit of respiratory chain NADH dehydrogenase (Complex I) which is composed of 45 different subunits.

The protein resides in the mitochondrion inner membrane. It carries out the reaction a ubiquinone + NADH + 5 H(+)(in) = a ubiquinol + NAD(+) + 4 H(+)(out). In terms of biological role, core subunit of the mitochondrial membrane respiratory chain NADH dehydrogenase (Complex I) which catalyzes electron transfer from NADH through the respiratory chain, using ubiquinone as an electron acceptor. Part of the enzyme membrane arm which is embedded in the lipid bilayer and involved in proton translocation. This Macaca nigra (Celebes black macaque) protein is NADH-ubiquinone oxidoreductase chain 4L (MT-ND4L).